A 459-amino-acid polypeptide reads, in one-letter code: ATP synthase subunit beta (459 aa).

Residue 148–155 coordinates ATP; the sequence is GGAGVGKT.

It belongs to the ATPase alpha/beta chains family. F-type ATPases have 2 components, CF(1) - the catalytic core - and CF(0) - the membrane proton channel. CF(1) has five subunits: alpha(3), beta(3), gamma(1), delta(1), epsilon(1). CF(0) has three main subunits: a(1), b(2) and c(9-12). The alpha and beta chains form an alternating ring which encloses part of the gamma chain. CF(1) is attached to CF(0) by a central stalk formed by the gamma and epsilon chains, while a peripheral stalk is formed by the delta and b chains.

The protein resides in the cell inner membrane. The catalysed reaction is ATP + H2O + 4 H(+)(in) = ADP + phosphate + 5 H(+)(out). Produces ATP from ADP in the presence of a proton gradient across the membrane. The catalytic sites are hosted primarily by the beta subunits. The polypeptide is ATP synthase subunit beta (Hahella chejuensis (strain KCTC 2396)).